The sequence spans 518 residues: ATP synthase subunit alpha (518 aa).

169–176 (GDRKTGKT) serves as a coordination point for ATP.

This sequence belongs to the ATPase alpha/beta chains family. F-type ATPases have 2 components, CF(1) - the catalytic core - and CF(0) - the membrane proton channel. CF(1) has five subunits: alpha(3), beta(3), gamma(1), delta(1), epsilon(1). CF(0) has three main subunits: a(1), b(2) and c(9-12). The alpha and beta chains form an alternating ring which encloses part of the gamma chain. CF(1) is attached to CF(0) by a central stalk formed by the gamma and epsilon chains, while a peripheral stalk is formed by the delta and b chains.

Its subcellular location is the cell membrane. It carries out the reaction ATP + H2O + 4 H(+)(in) = ADP + phosphate + 5 H(+)(out). Functionally, produces ATP from ADP in the presence of a proton gradient across the membrane. The alpha chain is a regulatory subunit. The protein is ATP synthase subunit alpha of Enterococcus faecalis (strain ATCC 700802 / V583).